The chain runs to 129 residues: Small ribosomal subunit protein uS11 (129 aa).

As to quaternary structure, part of the 30S ribosomal subunit. Interacts with proteins S7 and S18. Binds to IF-3. May be methylated on an undetermined residue.

Its function is as follows. Located on the platform of the 30S subunit, it bridges several disparate RNA helices of the 16S rRNA. Forms part of the Shine-Dalgarno cleft in the 70S ribosome. This chain is Small ribosomal subunit protein uS11, found in Rhodopseudomonas palustris (strain ATCC BAA-98 / CGA009).